Reading from the N-terminus, the 725-residue chain is Lipoamidase (725 aa).

The interval 1-52 is disordered; the sequence is MLAQESILETTVQTETESVTTETSQTVANLESETTSQTVMQEKESSSAIAES. Residues 9-27 show a composition bias toward low complexity; sequence ETTVQTETESVTTETSQTV. Residues 28–40 are compositionally biased toward polar residues; the sequence is ANLESETTSQTVM. Residues Lys-159 and Ser-235 each act as charge relay system in the active site. Ser-259 acts as the Acyl-ester intermediate in catalysis. The disordered stretch occupies residues 551–686; it reads KINQPHVEEP…NKSMIGKQEQ (136 aa). Residues 556-637 are compositionally biased toward basic and acidic residues; the sequence is HVEEPDKDKE…TSEGPIEGKD (82 aa). Residues 650 to 661 are compositionally biased toward low complexity; it reads SGSSLDNSLNSS. Residues 662 to 679 show a composition bias toward polar residues; the sequence is ANQGTKSTESTHAFSNKS. The chain crosses the membrane as a helical span at residues 700–720; it reads PSTFWIVLGGAFLVTSGTIYI.

The protein belongs to the amidase family. In terms of assembly, homodimer in solution.

The protein resides in the cell membrane. It catalyses the reaction N(6)-[(R)-lipoyl]-L-lysyl-[lipoyl-carrier protein] + H2O = L-lysyl-[lipoyl-carrier protein] + (R)-lipoate. Lipoamidase activity is slightly inhibited by p-chloromercuribenzoate. In terms of biological role, amidohydrolase that releases lipoic acid from the protein-bound form. Cleaves the amide bond that links lipoic acid to the lipoylated lysine epsilon-amino groups, leading to the formation of free lipoic acid plus the unmodified protein. Shows activity toward both high molecular weight protein substrates such as a lipoyl domain and intact 2-oxoacid dehydrogenases as well as small molecule substrates such as lipoyl-lysine. Also acts on small biotinylated substrates. Hydrolyzes the synthetic substrates methyl lipoate and lipoamide. The physiologically important substrates are probably lipoyl-lysine and small peptides containing lipoyl-lysine. Lpa seems likely to enable this bacterium to utilize amide-linked forms of lipoic acid that otherwise could not be assimilated. The chain is Lipoamidase from Enterococcus faecalis (Streptococcus faecalis).